A 439-amino-acid chain; its full sequence is Dolichyl-diphosphooligosaccharide--protein glycosyltransferase 48 kDa subunit (439 aa).

A signal peptide spans 1-25; sequence MELGAAARAWSLLWLLLPLLGLVGA. The Lumenal portion of the chain corresponds to 27–410; the sequence is GPRTLVLLDN…YERFIPSAYP (384 aa). The chain crosses the membrane as a helical span at residues 411–430; that stretch reads YYASAFSMMVGLFIFSVVFL. Residues 431-439 are Cytoplasmic-facing; that stretch reads HMKEKEKSD.

This sequence belongs to the DDOST 48 kDa subunit family. Component of the oligosaccharyltransferase (OST) complex. OST exists in two different complex forms which contain common core subunits RPN1, RPN2, OST48, OST4, DAD1 and TMEM258, either STT3A or STT3B as catalytic subunits, and form-specific accessory subunits. STT3A complex assembly occurs through the formation of 3 subcomplexes. Subcomplex 1 contains RPN1 and TMEM258, subcomplex 2 contains the STT3A-specific subunits STT3A, DC2/OSTC, and KCP2 as well as the core subunit OST4, and subcomplex 3 contains RPN2, DAD1, and OST48. The STT3A complex can form stable complexes with the Sec61 complex or with both the Sec61 and TRAP complexes. Interacts with SMIM22.

It localises to the endoplasmic reticulum membrane. It participates in protein modification; protein glycosylation. Functionally, subunit of the oligosaccharyl transferase (OST) complex that catalyzes the initial transfer of a defined glycan (Glc(3)Man(9)GlcNAc(2) in eukaryotes) from the lipid carrier dolichol-pyrophosphate to an asparagine residue within an Asn-X-Ser/Thr consensus motif in nascent polypeptide chains, the first step in protein N-glycosylation. N-glycosylation occurs cotranslationally and the complex associates with the Sec61 complex at the channel-forming translocon complex that mediates protein translocation across the endoplasmic reticulum (ER). All subunits are required for a maximal enzyme activity. Required for the assembly of both SST3A- and SS3B-containing OST complexes. The polypeptide is Dolichyl-diphosphooligosaccharide--protein glycosyltransferase 48 kDa subunit (Sus scrofa (Pig)).